The following is a 226-amino-acid chain: Putative uroporphyrinogen-III synthase (226 aa).

It belongs to the uroporphyrinogen-III synthase family.

It catalyses the reaction hydroxymethylbilane = uroporphyrinogen III + H2O. Its pathway is porphyrin-containing compound metabolism; protoporphyrin-IX biosynthesis; coproporphyrinogen-III from 5-aminolevulinate: step 3/4. Catalyzes cyclization of the linear tetrapyrrole, hydroxymethylbilane, to the macrocyclic uroporphyrinogen III. The sequence is that of Putative uroporphyrinogen-III synthase from Archaeoglobus fulgidus (strain ATCC 49558 / DSM 4304 / JCM 9628 / NBRC 100126 / VC-16).